Reading from the N-terminus, the 544-residue chain is Lysophosphatidylcholine acyltransferase 2 (544 aa).

Over 1 to 58 (MNRCAEAAAVAATVPGSGVGDSGLRPPMVPRQASFFPPPVPNPFVQQTRISAARRLQM) the chain is Cytoplasmic. Residues 59 to 79 (ILLGIILLPVRALLVGLVLLL) traverse the membrane as a helical; Signal-anchor for type II membrane protein segment. Residues 80–544 (AWPFAVISTV…EEGTSGKKVD (465 aa)) lie on the Lumenal side of the membrane. Positions 146-151 (HSTFFD) match the HXXXXD motif motif. Residues 220 to 223 (EGTC) carry the EGTC motif motif. 2 consecutive EF-hand domains span residues 391-426 (PVSD…LCNP) and 428-463 (NTED…SLGV). 10 residues coordinate Ca(2+): aspartate 404, asparagine 406, aspartate 408, serine 410, glutamate 415, aspartate 441, aspartate 443, aspartate 445, tyrosine 447, and glutamate 452. Polar residues predominate over residues 520 to 530 (TAPSVASNKVS). A disordered region spans residues 520-544 (TAPSVASNKVSPESHEEGTSGKKVD). A compositionally biased stretch (basic and acidic residues) spans 531 to 544 (PESHEEGTSGKKVD).

This sequence belongs to the 1-acyl-sn-glycerol-3-phosphate acyltransferase family.

It localises to the endoplasmic reticulum membrane. Its subcellular location is the golgi apparatus membrane. It is found in the cell membrane. The protein localises to the lipid droplet. It catalyses the reaction a 1-acyl-sn-glycero-3-phosphocholine + an acyl-CoA = a 1,2-diacyl-sn-glycero-3-phosphocholine + CoA. It carries out the reaction a 1-O-alkyl-sn-glycero-3-phosphocholine + acetyl-CoA = a 1-O-alkyl-2-acetyl-sn-glycero-3-phosphocholine + CoA. The catalysed reaction is a 1-acyl-sn-glycero-3-phosphate + an acyl-CoA = a 1,2-diacyl-sn-glycero-3-phosphate + CoA. The enzyme catalyses a 1-O-(1Z-alkenyl)-sn-glycero-3-phosphocholine + an acyl-CoA = a 1-O-(1Z-alkenyl)-2-acyl-sn-glycero-3-phosphocholine + CoA. It catalyses the reaction 1-hexadecanoyl-sn-glycero-3-phosphate + (9Z)-octadecenoyl-CoA = 1-hexadecanoyl-2-(9Z-octadecenoyl)-sn-glycero-3-phosphate + CoA. It carries out the reaction 1-(9Z-octadecenoyl)-sn-glycero-3-phosphate + (9Z)-octadecenoyl-CoA = 1,2-di-(9Z-octadecenoyl)-sn-glycero-3-phosphate + CoA. The catalysed reaction is 1-(9Z-octadecenoyl)-sn-glycero-3-phosphate + hexadecanoyl-CoA = 1-(9Z)-octadecenoyl-2-hexadecanoyl-sn-glycero-3-phosphate + CoA. The enzyme catalyses 1-heptadecanoyl-sn-glycero-3-phosphate + (9Z)-octadecenoyl-CoA = 1-heptadecanoyl-2-(9Z)-octadecenoyl-sn-glycero-3-phosphate + CoA. It catalyses the reaction 1-octadecanoyl-sn-glycero-3-phosphate + (9Z)-octadecenoyl-CoA = 1-octadecanoyl-2-(9Z-octadecenoyl)-sn-glycero-3-phosphate + CoA. It carries out the reaction heptadecanoyl-CoA + 1-(9Z-octadecenoyl)-sn-glycero-3-phosphate = 1-(9Z)-octadecenoyl-2-heptadecanoyl-sn-glycero-3-phosphate + CoA. The catalysed reaction is 1-(9Z-octadecenoyl)-sn-glycero-3-phosphate + (9Z,12Z)-octadecadienoyl-CoA = 1-(9Z)-octadecenoyl-2-(9Z,12Z)-octadecadienoyl-sn-glycero-3-phosphate + CoA. The enzyme catalyses 1-(9Z-octadecenoyl)-sn-glycero-3-phosphate + tetradecanoyl-CoA = 1-(9Z)-octadecenoyl-2-tetradecanoyl-sn-glycero-3-phosphate + CoA. It catalyses the reaction pentadecanoyl-CoA + 1-(9Z-octadecenoyl)-sn-glycero-3-phosphate = 1-(9Z)-octadecenoyl-2-pentadecanoyl-sn-glycero-3-phosphate + CoA. It carries out the reaction nonadecanoyl-CoA + 1-(9Z-octadecenoyl)-sn-glycero-3-phosphate = 1-(9Z)-octadecenoyl-2-nonadecanoyl-sn-glycero-3-phosphate + CoA. The catalysed reaction is 1-hexadecanoyl-sn-glycero-3-phosphocholine + (9Z)-octadecenoyl-CoA = 1-hexadecanoyl-2-(9Z-octadecenoyl)-sn-glycero-3-phosphocholine + CoA. The enzyme catalyses 1-O-hexadecyl-sn-glycero-3-phosphocholine + acetyl-CoA = 1-O-hexadecyl-2-acetyl-sn-glycero-3-phosphocholine + CoA. It catalyses the reaction 1-O-octadecyl-sn-glycero-3-phosphocholine + acetyl-CoA = 1-O-octadecyl-2-acetyl-sn-glycero-3-phosphocholine + CoA. It carries out the reaction 1-hexadecanoyl-sn-glycero-3-phosphocholine + acetyl-CoA = 1-hexadecanoyl-2-acetyl-sn-glycero-3-phosphocholine + CoA. The catalysed reaction is 1-octadecanoyl-sn-glycero-3-phosphocholine + acetyl-CoA = 1-octadecanoyl-2-acetyl-sn-glycero-3-phosphocholine + CoA. The enzyme catalyses a 1-O-(1Z-alkenyl)-sn-glycero-3-phosphocholine + acetyl-CoA = 1-O-(1Z)-alkenyl-2-acetyl-sn-glycero-3-phosphocholine + CoA. It catalyses the reaction 1-O-octadecyl-sn-glycero-3-phosphocholine + (5Z,8Z,11Z,14Z)-eicosatetraenoyl-CoA = 1-O-octadecyl-2-(5Z,8Z,11Z,14Z)-eicosatetraenoyl-sn-glycero-3-phosphocholine + CoA. Its pathway is lipid metabolism; phospholipid metabolism. Its function is as follows. Exhibits both acyltransferase and acetyltransferase activities. Activity is calcium-dependent. Catalyzes the conversion of lysophosphatidylcholine (1-acyl-sn-glycero-3-phosphocholine or LPC) into phosphatidylcholine (1,2-diacyl-sn-glycero-3-phosphocholine or PC). Catalyzes the conversion 1-acyl-sn-glycerol-3-phosphate (lysophosphatidic acid or LPA) into 1,2-diacyl-sn-glycerol-3-phosphate (phosphatidic acid or PA) by incorporating an acyl moiety at the sn-2 position of the glycerol backbone. Involved in platelet-activating factor (PAF) biosynthesis by catalyzing the conversion of the PAF precursor, 1-O-alkyl-sn-glycero-3-phosphocholine (lyso-PAF) into 1-O-alkyl-2-acetyl-sn-glycero-3-phosphocholine (PAF). Also converts lyso-PAF to 1-O-alkyl-2-acyl-sn-glycero-3-phosphocholine (PC), a major component of cell membranes and a PAF precursor. Under resting conditions, acyltransferase activity is preferred. Upon acute inflammatory stimulus, acetyltransferase activity is enhanced and PAF synthesis increases. Involved in the regulation of lipid droplet number and size. In Rattus norvegicus (Rat), this protein is Lysophosphatidylcholine acyltransferase 2 (Lpcat2).